The chain runs to 150 residues: Ferric uptake regulation protein (150 aa).

Positions 1-84 (MSDNNQALKD…GGKSVFELST (84 aa)) are DNA-binding. Zn(2+) contacts are provided by histidine 33 and glutamate 81. The interval 85–143 (QHHHDHLVCLDCGEVIEFSDDVIEQRQKEIAAKYNVQLTNHSLYLYGKCGSDGSCKDNP) is dimerization. The Fe cation site is built by histidine 87 and aspartate 89. 4 residues coordinate Zn(2+): histidine 90, cysteine 93, cysteine 96, and glutamate 101. 2 residues coordinate Fe cation: glutamate 108 and histidine 125.

The protein belongs to the Fur family. As to quaternary structure, homodimer.

The protein resides in the cytoplasm. Fur acts as a repressor, employing Fe(2+) as a cofactor to bind the operator of the iron transport operon. The sequence is that of Ferric uptake regulation protein (fur) from Vibrio cholerae serotype O1 (strain ATCC 39541 / Classical Ogawa 395 / O395).